We begin with the raw amino-acid sequence, 89 residues long: Small ribosomal subunit protein uS14 (89 aa).

Belongs to the universal ribosomal protein uS14 family. As to quaternary structure, part of the 30S ribosomal subunit. Contacts proteins S3 and S10.

Functionally, binds 16S rRNA, required for the assembly of 30S particles and may also be responsible for determining the conformation of the 16S rRNA at the A site. The chain is Small ribosomal subunit protein uS14 from Lacticaseibacillus casei (strain BL23) (Lactobacillus casei).